Here is a 113-residue protein sequence, read N- to C-terminus: Integration host factor subunit alpha (113 aa).

This sequence belongs to the bacterial histone-like protein family. As to quaternary structure, heterodimer of an alpha and a beta chain.

In terms of biological role, this protein is one of the two subunits of integration host factor, a specific DNA-binding protein that functions in genetic recombination as well as in transcriptional and translational control. The protein is Integration host factor subunit alpha of Rhodopseudomonas palustris (strain BisA53).